The primary structure comprises 254 residues: MAPSPAEFSDQQQPAPHRTVQPPGVGYIPTDDERRVFRECNEESFWYRSLPISAVSMIVTQGLISRGILTTSSRFGSLPKVAFAGLCGYLAGKVSYMKTCQEKFKRLENSPLGEALRQGYRNIPTQYPSGTSEFSDVNPKTASPADGFASNVVEPPSSVYSSHHNSTSDTVPFSTSLGESSPSGISDNIAPEPAALLEDTPKRKPMTYDELRSRNRETYEMAVTQRADAPVRSSLDRAARKDVKTNKYGDVWEE.

Disordered regions lie at residues 1–28 and 124–254; these read MAPSPAEFSDQQQPAPHRTVQPPGVGYI and PTQY…VWEE. In terms of domain architecture, OCIA spans 1–114; that stretch reads MAPSPAEFSD…KRLENSPLGE (114 aa). Polar residues predominate over residues 124–141; it reads PTQYPSGTSEFSDVNPKT. Over residues 157–168 the composition is skewed to low complexity; sequence SSVYSSHHNSTS. The span at 169 to 186 shows a compositional bias: polar residues; sequence DTVPFSTSLGESSPSGIS. Basic and acidic residues-rich tracts occupy residues 199 to 219 and 234 to 247; these read DTPKRKPMTYDELRSRNRETY and SLDRAARKDVKTNK.

This sequence belongs to the OCIAD1 family.

The protein resides in the endosome. This Xenopus tropicalis (Western clawed frog) protein is OCIA domain-containing protein 1 (ociad1).